The chain runs to 270 residues: Electron transfer flavoprotein subunit beta (270 aa).

Belongs to the ETF alpha-subunit/FixB family. Heterodimer of an alpha and a beta subunit. FAD serves as cofactor.

The electron transfer flavoprotein serves as a specific electron acceptor for other dehydrogenases. It transfers the electrons to the main respiratory chain via ETF-ubiquinone oxidoreductase (ETF dehydrogenase). The chain is Electron transfer flavoprotein subunit beta (etfB) from Megasphaera elsdenii.